The primary structure comprises 387 residues: Small ribosomal subunit biogenesis GTPase RsgA (387 aa).

The CP-type G domain occupies 112–273 (YDGLKPVAAN…LIDSPGVREF (162 aa)). GTP contacts are provided by residues 159–162 (NKID) and 213–221 (GQSGVGKSS). Zn(2+)-binding residues include Cys297, Cys302, His304, and Cys310.

It belongs to the TRAFAC class YlqF/YawG GTPase family. RsgA subfamily. As to quaternary structure, monomer. Associates with 30S ribosomal subunit, binds 16S rRNA. Zn(2+) serves as cofactor.

It is found in the cytoplasm. One of several proteins that assist in the late maturation steps of the functional core of the 30S ribosomal subunit. Helps release RbfA from mature subunits. May play a role in the assembly of ribosomal proteins into the subunit. Circularly permuted GTPase that catalyzes slow GTP hydrolysis, GTPase activity is stimulated by the 30S ribosomal subunit. The protein is Small ribosomal subunit biogenesis GTPase RsgA of Vibrio cholerae serotype O1 (strain ATCC 39315 / El Tor Inaba N16961).